The primary structure comprises 23 residues: Large ribosomal subunit protein uL10 (23 aa).

The protein belongs to the universal ribosomal protein uL10 family. Part of the ribosomal stalk of the 50S ribosomal subunit. The N-terminus interacts with L11 and the large rRNA to form the base of the stalk. The C-terminus forms an elongated spine to which L12 dimers bind in a sequential fashion forming a multimeric L10(L12)X complex.

In terms of biological role, forms part of the ribosomal stalk, playing a central role in the interaction of the ribosome with GTP-bound translation factors. This is Large ribosomal subunit protein uL10 (rplJ) from Klebsiella pneumoniae.